Reading from the N-terminus, the 185-residue chain is Ribosome-recycling factor (185 aa).

Belongs to the RRF family.

The protein resides in the cytoplasm. Functionally, responsible for the release of ribosomes from messenger RNA at the termination of protein biosynthesis. May increase the efficiency of translation by recycling ribosomes from one round of translation to another. This Pseudomonas fluorescens (strain SBW25) protein is Ribosome-recycling factor.